The chain runs to 506 residues: Bifunctional purine biosynthesis protein PurH (506 aa).

One can recognise an MGS-like domain in the interval 1 to 142 (MRAIISVYRK…KNFFRVVILV (142 aa)).

It belongs to the PurH family.

It carries out the reaction (6R)-10-formyltetrahydrofolate + 5-amino-1-(5-phospho-beta-D-ribosyl)imidazole-4-carboxamide = 5-formamido-1-(5-phospho-D-ribosyl)imidazole-4-carboxamide + (6S)-5,6,7,8-tetrahydrofolate. The catalysed reaction is IMP + H2O = 5-formamido-1-(5-phospho-D-ribosyl)imidazole-4-carboxamide. It functions in the pathway purine metabolism; IMP biosynthesis via de novo pathway; 5-formamido-1-(5-phospho-D-ribosyl)imidazole-4-carboxamide from 5-amino-1-(5-phospho-D-ribosyl)imidazole-4-carboxamide (10-formyl THF route): step 1/1. The protein operates within purine metabolism; IMP biosynthesis via de novo pathway; IMP from 5-formamido-1-(5-phospho-D-ribosyl)imidazole-4-carboxamide: step 1/1. The sequence is that of Bifunctional purine biosynthesis protein PurH from Aquifex aeolicus (strain VF5).